A 308-amino-acid polypeptide reads, in one-letter code: MSAQKPGLHPRNRHQHRYDLAALCQTTPELTSFLIRTPAGEQSVDFANPQAVKALNKALLAHFYAVTHWDIPPGFLCPPVPGRADYIHHLADLLGETTGSIPAQATILDVGVGANCIYPLIGVHEYGWRFTGSEVSDAAMSSAQAIIQANTGLSRAIRLRRQKDPAAIFTGIIHKNEFYDATLCNPPFHDSAAAARAGSERKRRNLGQNKDDALNFGGQQQELWCEGGEVAFIKKMIAESQSFRRQVLWFTTLVSRGENLPPLYRALTEAGAVKVVKKEMAQGQKQSRFIAWTFMDDDQRRRFITRKR.

Belongs to the methyltransferase superfamily. METTL16/RlmF family.

Its subcellular location is the cytoplasm. The catalysed reaction is adenosine(1618) in 23S rRNA + S-adenosyl-L-methionine = N(6)-methyladenosine(1618) in 23S rRNA + S-adenosyl-L-homocysteine + H(+). Functionally, specifically methylates the adenine in position 1618 of 23S rRNA. This is Ribosomal RNA large subunit methyltransferase F from Salmonella dublin (strain CT_02021853).